Consider the following 316-residue polypeptide: Olfactory receptor 2AG2 (316 aa).

Residues 1–30 (MELRNSTLGSGFILVGILNDSGSPELLYAT) lie on the Extracellular side of the membrane. N-linked (GlcNAc...) asparagine glycans are attached at residues N5 and N19. The helical transmembrane segment at 31–51 (FTILYMLALTSNGLLLLAITI) threads the bilayer. Over 52–56 (EARLH) the chain is Cytoplasmic. A helical membrane pass occupies residues 57-77 (MPMYLLLGQLSLMDLLFTSVV). Topologically, residues 78–97 (TPKALADFLRRENTISFGGC) are extracellular. Cysteines 97 and 179 form a disulfide. The chain crosses the membrane as a helical span at residues 98–118 (ALQMFLALTMGSAEDLLLAFM). Topologically, residues 119 to 139 (AYDRYVAICHPLKYMTLMSPR) are cytoplasmic. Residues 140 to 160 (VCWIMVATSWILASLIAIGHT) form a helical membrane-spanning segment. Over 161–205 (MYTMHLPFCVSWEIRHLLCEIPPLLKLACADTSRYELIIYVTGVT) the chain is Extracellular. The helical transmembrane segment at 206 to 226 (FLLLPISAIVASYTLVLFTVL) threads the bilayer. At 227–244 (RMPSNEGRKKALVTCSSH) the chain is on the cytoplasmic side. A helical transmembrane segment spans residues 245-265 (LIVVGMFYGAATFMYVLPSSF). Over 266–271 (HSPKQD) the chain is Extracellular. Residues 272–292 (NIISVFYTIVTPALNPLIYSL) traverse the membrane as a helical segment. Residues 293 to 316 (RNKEVMRALRRVLGKYILLAHSTL) lie on the Cytoplasmic side of the membrane.

It belongs to the G-protein coupled receptor 1 family.

The protein resides in the cell membrane. Odorant receptor. The chain is Olfactory receptor 2AG2 (OR2AG2) from Homo sapiens (Human).